A 540-amino-acid chain; its full sequence is Ecdysone 20-monooxygenase (540 aa).

Residue C488 participates in heme binding.

This sequence belongs to the cytochrome P450 family. The cofactor is heme. In terms of tissue distribution, strong expression by embryonic stage 10 in epidermis, decreases significantly in older embryos. Third instar larvae show expression in the midgut copper cells, Malpighian tubules and fat body. In the adult ovaries, expression is seen in both nurse cells and centripetally migrating follicle cells.

Its subcellular location is the mitochondrion membrane. The enzyme catalyses ecdysone + AH2 + O2 = 20-hydroxyecdysone + A + H2O. The protein operates within steroid biosynthesis; ecdysteroid biosynthesis. Functionally, required for CNS development; midline glial cells. Involved in the metabolism of insect hormones; responsible for all ecdysone 20-monooxygenase activity during embryonic, larval and adult stages. May be involved in the breakdown of synthetic insecticides. In Drosophila melanogaster (Fruit fly), this protein is Ecdysone 20-monooxygenase (shd).